The following is a 952-amino-acid chain: MAPAVAGGGGRRNNEGVNGNAAAPACVCGFPVCACAGAAAVASAASSADMDIVAAGQIGAVNDESWVAVDLSDSDDAPAAGDVQGALDDRPVFRTEKIKGVLLHPYRVLIFVRLIAFTLFVIWRIEHKNPDAMWLWVTSIAGEFWFGFSWLLDQLPKLNPINRVPDLAVLRRRFDHADGTSSLPGLDIFVTTADPIKEPILSTANSILSILAADYPVDRNTCYLSDDSGMLLTYEAMAEAAKFATLWVPFCRKHAIEPRGPESYFELKSHPYMGRAQEEFVNDRRRVRKEYDDFKARINGLEHDIKQRSDSYNAAAGVKDGEPRATWMADGSQWEGTWIEQSENHRKGDHAGIVLVLLNHPSHARQLGPPASADNPLDFSGVDVRLPMLVYVAREKRPGCNHQKKAGAMNALTRASAVLSNSPFILNLDCDHYINNSQALRAGICFMLGRDSDTVAFVQFPQRFEGVDPTDLYANHNRIFFDGTLRALDGLQGPIYVGTGCLFRRITLYGFEPPRINVGGPCFPRLGGMFAKNRYQKPGFEMTKPGAKPVAPPPAATVAKGKHGFLPMPKKAYGKSDAFADTIPRASHPSPYAAEAAVAADEAAIAEAVMVTAAAYEKKTGWGSDIGWVYGTVTEDVVTGYRMHIKGWRSRYCSIYPHAFIGTAPINLTERLFQVLRWSTGSLEIFFSRNNPLFGSTFLHPLQRVAYINITTYPFTALFLIFYTTVPALSFVTGHFIVQRPTTMFYVYLAIVLGTLLILAVLEVKWAGVTVFEWFRNGQFWMTASCSAYLAAVLQVVTKVVFRRDISFKLTSKLPAGDEKKDPYADLYVVRWTWLMITPIIIILVNIIGSAVAFAKVLDGEWTHWLKVAGGVFFNFWVLFHLYPFAKGILGKHGKTPVVVLVWWAFTFVITAVLYINIPHIHGPGRHGAASPSHGHHSAHGTKKYDFTYAWP.

A run of 2 helical transmembrane segments spans residues 102 to 122 (LLHP…LFVI) and 132 to 152 (AMWL…SWLL). Asp227 is an active-site residue. A coiled-coil region spans residues 278 to 308 (EEFVNDRRRVRKEYDDFKARINGLEHDIKQR). Residues Asp429 and Asp431 each coordinate substrate. Residue Asp636 is part of the active site. 6 helical membrane passes run 718-738 (LFLI…HFIV), 744-764 (MFYV…VLEV), 782-802 (MTAS…KVVF), 834-854 (WLMI…AVAF), 865-885 (WLKV…LYPF), and 898-918 (VVVL…YINI).

This sequence belongs to the glycosyltransferase 2 family. Plant cellulose synthase-like F subfamily.

It localises to the golgi apparatus membrane. Its function is as follows. May catalyze both beta-1,3 and beta-1,4 glycosidic linkage on beta-D-glucan. Essential for (1,3;1,4)-beta-D-glucans synthesis in grasses and cereals (Poaceae). The mixed-linked glucans (which are not present in walls of dicotyledons or most other monocotyledonous plants) are particularly important constituents of the walls of the starchy endosperm and aleurone cells of cereal grains such as oats, wheat, rice and barley. They can account for up to 70% by weight of the wall. This chain is Probable mixed-linked glucan synthase 6 (CSLF6), found in Oryza sativa subsp. japonica (Rice).